The following is a 570-amino-acid chain: Glutamate--tRNA ligase (570 aa).

Positions 107–117 match the 'HIGH' region motif; it reads PNPDFVLHLGS.

The protein belongs to the class-I aminoacyl-tRNA synthetase family. Glutamate--tRNA ligase type 2 subfamily.

Its subcellular location is the cytoplasm. The catalysed reaction is tRNA(Glu) + L-glutamate + ATP = L-glutamyl-tRNA(Glu) + AMP + diphosphate. In terms of biological role, catalyzes the attachment of glutamate to tRNA(Glu) in a two-step reaction: glutamate is first activated by ATP to form Glu-AMP and then transferred to the acceptor end of tRNA(Glu). The polypeptide is Glutamate--tRNA ligase (Pyrobaculum calidifontis (strain DSM 21063 / JCM 11548 / VA1)).